The primary structure comprises 651 residues: Probable endo-1,3(4)-beta-glucanase NFIA_089530 (651 aa).

A signal peptide spans 1–21 (MAPSSLFLSVGSLIASSLVSA). In terms of domain architecture, GH16 spans 36–289 (ESWQGESFIN…WAGNVFAEST (254 aa)). Residue Asn-64 is glycosylated (N-linked (GlcNAc...) asparagine). Catalysis depends on Glu-145, which acts as the Nucleophile. The Proton donor role is filled by Glu-150. Asn-200 carries N-linked (GlcNAc...) asparagine glycosylation. Over residues 364 to 378 (PVPAETTAVPQPAQT) the composition is skewed to low complexity. Disordered regions lie at residues 364–422 (PVPA…ESTS) and 508–557 (SEIP…PVPA). Polar residues-rich tracts occupy residues 379–400 (NTVA…TTVP) and 520–535 (QAVS…TAQG). Residues 542 to 557 (SIASASAAPSTIPVPA) are compositionally biased toward low complexity. Residue Asn-629 is the site of GPI-anchor amidated asparagine attachment. Residues 630-651 (GANRMSVGLSGLIGVMFIAALA) constitute a propeptide, removed in mature form.

The protein belongs to the glycosyl hydrolase 16 family.

It is found in the cell membrane. It carries out the reaction Endohydrolysis of (1-&gt;3)- or (1-&gt;4)-linkages in beta-D-glucans when the glucose residue whose reducing group is involved in the linkage to be hydrolyzed is itself substituted at C-3.. Its function is as follows. Mixed-linked glucanase involved in the degradation of complex natural cellulosic substrates. This is Probable endo-1,3(4)-beta-glucanase NFIA_089530 from Neosartorya fischeri (strain ATCC 1020 / DSM 3700 / CBS 544.65 / FGSC A1164 / JCM 1740 / NRRL 181 / WB 181) (Aspergillus fischerianus).